Reading from the N-terminus, the 207-residue chain is Transcription antitermination protein NusB (207 aa).

The protein belongs to the NusB family.

Its function is as follows. Involved in transcription antitermination. Required for transcription of ribosomal RNA (rRNA) genes. Binds specifically to the boxA antiterminator sequence of the ribosomal RNA (rrn) operons. In Trichodesmium erythraeum (strain IMS101), this protein is Transcription antitermination protein NusB.